Reading from the N-terminus, the 72-residue chain is uncharacterized protein (72 aa).

The Cytoplasmic segment spans residues 1-12; sequence MSKHKHEWTESV. Residues 13–32 form a helical membrane-spanning segment; it reads ANSGPASILSYCASSILMTV. The Lumenal portion of the chain corresponds to 33 to 46; sequence TNKFVVNLDNFNMN. Residues 47–69 traverse the membrane as a helical segment; that stretch reads FVMLFVQSLVCTVTLCILRIVGV. The Cytoplasmic segment spans residues 70–72; the sequence is ANF.

The protein belongs to the TPT transporter family. SLC35D subfamily.

The protein resides in the membrane. This is an uncharacterized protein from Saccharomyces cerevisiae (strain RM11-1a) (Baker's yeast).